Consider the following 309-residue polypeptide: Probable manganese-dependent inorganic pyrophosphatase (309 aa).

Mn(2+) contacts are provided by H9, D13, D15, D75, H97, and D149.

This sequence belongs to the PPase class C family. It depends on Mn(2+) as a cofactor.

It localises to the cytoplasm. It carries out the reaction diphosphate + H2O = 2 phosphate + H(+). This is Probable manganese-dependent inorganic pyrophosphatase from Bacillus cereus (strain G9842).